The primary structure comprises 192 residues: Ion-translocating oxidoreductase complex subunit A (192 aa).

6 consecutive transmembrane segments (helical) span residues 5 to 25 (LLLLIGTVLVNNFVLVKFLGL), 39 to 59 (IGMSMATTFVLTLASVLSFLV), 72 to 92 (LRTMSFILVIAVVVQFTEMLV), 102 to 122 (ALGIYLPLITTNCAVLGVALL), 134 to 154 (AIYGFGAAVGFSLVLILFSAM), and 171 to 191 (AIAMITAGLMSLAFMGFTGLV).

Belongs to the NqrDE/RnfAE family. The complex is composed of six subunits: RnfA, RnfB, RnfC, RnfD, RnfE and RnfG.

It localises to the cell inner membrane. In terms of biological role, part of a membrane-bound complex that couples electron transfer with translocation of ions across the membrane. This Shewanella amazonensis (strain ATCC BAA-1098 / SB2B) protein is Ion-translocating oxidoreductase complex subunit A.